The primary structure comprises 366 residues: Cytochrome c peroxidase, mitochondrial (366 aa).

His123 acts as the Proton acceptor in catalysis. The span at 195-206 shows a compositional bias: basic and acidic residues; sequence IEWRPGRVDDNT. The interval 195 to 218 is disordered; the sequence is IEWRPGRVDDNTASKVPPNGRLPD. His247 contacts heme b. Trp263 functions as the Tryptophan radical intermediate in the catalytic mechanism.

This sequence belongs to the peroxidase family. Cytochrome c peroxidase subfamily. As to quaternary structure, forms a one-to-one complex with cytochrome c. Heme b serves as cofactor.

It is found in the mitochondrion matrix. It localises to the mitochondrion intermembrane space. It carries out the reaction 2 Fe(II)-[cytochrome c] + H2O2 + 2 H(+) = 2 Fe(III)-[cytochrome c] + 2 H2O. In terms of biological role, destroys radicals which are normally produced within the cells and which are toxic to biological systems. In Candida albicans (strain SC5314 / ATCC MYA-2876) (Yeast), this protein is Cytochrome c peroxidase, mitochondrial (CCP1).